Consider the following 114-residue polypeptide: UPF0342 protein LCA_0622 (114 aa).

This sequence belongs to the UPF0342 family.

In Latilactobacillus sakei subsp. sakei (strain 23K) (Lactobacillus sakei subsp. sakei), this protein is UPF0342 protein LCA_0622.